The primary structure comprises 251 residues: CDP-diacylglycerol pyrophosphatase (251 aa).

The helical transmembrane segment at 5-25 (GYFLLAVIVIVAAAGVGYWKF) threads the bilayer.

This sequence belongs to the Cdh family.

The protein localises to the cell inner membrane. It catalyses the reaction a CDP-1,2-diacyl-sn-glycerol + H2O = a 1,2-diacyl-sn-glycero-3-phosphate + CMP + 2 H(+). The protein operates within phospholipid metabolism; CDP-diacylglycerol degradation; phosphatidate from CDP-diacylglycerol: step 1/1. This chain is CDP-diacylglycerol pyrophosphatase, found in Salmonella enteritidis PT4 (strain P125109).